Consider the following 182-residue polypeptide: uncharacterized protein (182 aa).

Helical transmembrane passes span 76–96 and 114–130; these read LLLA…LALA and LDLL…LIGA.

Its subcellular location is the membrane. This is an uncharacterized protein from Saccharomyces cerevisiae (strain ATCC 204508 / S288c) (Baker's yeast).